The sequence spans 134 residues: Small ribosomal subunit protein uS12 (134 aa).

Residues 1–26 (MPTTQQLLRKGRTTLQKKSKVPALKG) are disordered. Basic residues predominate over residues 9 to 20 (RKGRTTLQKKSK). Position 89 is a 3-methylthioaspartic acid (aspartate 89). A disordered region spans residues 103-134 (DTQGVKDRNKSRSKYGTKKPKAGAAAAGAKKK). Residues 113-123 (SRSKYGTKKPK) show a composition bias toward basic residues. Positions 124 to 134 (AGAAAAGAKKK) are enriched in low complexity.

This sequence belongs to the universal ribosomal protein uS12 family. Part of the 30S ribosomal subunit. Contacts proteins S8 and S17. May interact with IF1 in the 30S initiation complex.

Functionally, with S4 and S5 plays an important role in translational accuracy. Interacts with and stabilizes bases of the 16S rRNA that are involved in tRNA selection in the A site and with the mRNA backbone. Located at the interface of the 30S and 50S subunits, it traverses the body of the 30S subunit contacting proteins on the other side and probably holding the rRNA structure together. The combined cluster of proteins S8, S12 and S17 appears to hold together the shoulder and platform of the 30S subunit. The polypeptide is Small ribosomal subunit protein uS12 (Deinococcus geothermalis (strain DSM 11300 / CIP 105573 / AG-3a)).